The chain runs to 180 residues: NADH-quinone oxidoreductase subunit I (180 aa).

4Fe-4S ferredoxin-type domains are found at residues 50-80 (LTRN…LQKS) and 90-119 (KFFR…LMPD). [4Fe-4S] cluster-binding residues include Cys-60, Cys-63, Cys-66, Cys-70, Cys-99, Cys-102, Cys-105, and Cys-109.

It belongs to the complex I 23 kDa subunit family. NDH-1 is composed of 13 different subunits. Subunits NuoA, H, J, K, L, M, N constitute the membrane sector of the complex. The cofactor is [4Fe-4S] cluster.

The protein localises to the cell membrane. It carries out the reaction a quinone + NADH + 5 H(+)(in) = a quinol + NAD(+) + 4 H(+)(out). NDH-1 shuttles electrons from NADH, via FMN and iron-sulfur (Fe-S) centers, to quinones in the respiratory chain. The immediate electron acceptor for the enzyme in this species is believed to be ubiquinone. Couples the redox reaction to proton translocation (for every two electrons transferred, four hydrogen ions are translocated across the cytoplasmic membrane), and thus conserves the redox energy in a proton gradient. In Buchnera aphidicola subsp. Acyrthosiphon pisum (strain APS) (Acyrthosiphon pisum symbiotic bacterium), this protein is NADH-quinone oxidoreductase subunit I.